The chain runs to 228 residues: Auxin-responsive protein IAA16 (228 aa).

Residues 19–23 (LSLAL) carry the EAR-like (transcriptional repression) motif. Residues 28–39 (SSSGLQGNTSTA) are compositionally biased toward polar residues. Disordered stretches follow at residues 28-57 (SSSGLQGNTSTAADGAKGNDGFKASRPAAP) and 70-90 (NLASSSSSSKPPRGGRDAAAA). A PB1 domain is found at 97 to 214 (ARFVKVNMDG…RVLRSSDLNA (118 aa)).

The protein belongs to the Aux/IAA family. As to quaternary structure, homodimers and heterodimers. As to expression, expressed in roots, flowers and seedlings.

It localises to the nucleus. In terms of biological role, aux/IAA proteins are short-lived transcriptional factors that function as repressors of early auxin response genes at low auxin concentrations. This is Auxin-responsive protein IAA16 (IAA16) from Oryza sativa subsp. japonica (Rice).